The following is a 413-amino-acid chain: Glycosyl hydrolase family 109 protein 2 (413 aa).

NAD(+)-binding positions include 26–27 (NR), Asp-48, 96–99 (WLTH), 116–117 (EV), and Asn-145. Tyr-174 contributes to the substrate binding site. NAD(+) is bound by residues 191–195 (YHNHW) and Tyr-208. Residues 208–211 (YPTH) and Tyr-290 contribute to the substrate site.

Belongs to the Gfo/Idh/MocA family. Glycosyl hydrolase 109 subfamily. NAD(+) serves as cofactor.

Its function is as follows. Glycosidase. The chain is Glycosyl hydrolase family 109 protein 2 from Phocaeicola vulgatus (strain ATCC 8482 / DSM 1447 / JCM 5826 / CCUG 4940 / NBRC 14291 / NCTC 11154) (Bacteroides vulgatus).